We begin with the raw amino-acid sequence, 134 residues long: Calvin cycle protein CP12-3, chloroplastic (134 aa).

Positions 1–21 are disordered; the sequence is MISGSATASHGRVLLPSQRER. The N-terminal 42 residues, 1-42, are a transit peptide targeting the chloroplast; the sequence is MISGSATASHGRVLLPSQRERRPVSTGSNILRFRETVPRQFS. Intrachain disulfides connect cysteine 78/cysteine 87 and cysteine 120/cysteine 129.

Belongs to the CP12 family. Monomer. Component of a complex that contains two dimers of PRK, two tetramers of GAPDH and CP12. CP12 associates with GAPDH, causing its conformation to change. This GAPDH/CP12 complex binds PRK to form a half-complex (one unit). This unit probably dimerizes due partially to interactions between the enzymes of each unit. In terms of processing, contains two disulfide bonds; only the oxidized protein, with two disulfide bonds, is active in complex formation. The C-terminal disulfide is involved in the interaction with GAPDH and the N-terminal disulfide mediates the binding of PRK with this binary complex. Mostly expressed, at low levels, in stems and, to a lesser extent, in leaves and roots.

It is found in the plastid. Its subcellular location is the chloroplast. Functionally, acts as a linker essential in the assembly of a core complex of PRK/GAPDH. Coordinates the reversible inactivation of chloroplast enzymes GAPDH and PRK during darkness in photosynthetic tissues. This Arabidopsis thaliana (Mouse-ear cress) protein is Calvin cycle protein CP12-3, chloroplastic (CP12-3).